The primary structure comprises 330 residues: Aspartate--ammonia ligase (330 aa).

Belongs to the class-II aminoacyl-tRNA synthetase family. AsnA subfamily.

Its subcellular location is the cytoplasm. It carries out the reaction L-aspartate + NH4(+) + ATP = L-asparagine + AMP + diphosphate + H(+). It functions in the pathway amino-acid biosynthesis; L-asparagine biosynthesis; L-asparagine from L-aspartate (ammonia route): step 1/1. The sequence is that of Aspartate--ammonia ligase from Escherichia coli O139:H28 (strain E24377A / ETEC).